Reading from the N-terminus, the 439-residue chain is Xylose isomerase (439 aa).

Catalysis depends on residues His101 and Asp104. Residues Glu232, Glu268, His271, Asp296, Asp307, Asp309, and Asp339 each contribute to the Mg(2+) site.

It belongs to the xylose isomerase family. Homotetramer. It depends on Mg(2+) as a cofactor.

It is found in the cytoplasm. The enzyme catalyses alpha-D-xylose = alpha-D-xylulofuranose. This is Xylose isomerase from Photobacterium profundum (strain SS9).